A 548-amino-acid polypeptide reads, in one-letter code: Eukaryotic translation initiation factor 3 subunit D (548 aa).

Residue lysine 53 is modified to N6-acetyllysine. The residue at position 161 (serine 161) is a Phosphoserine. An RNA gate region spans residues 285-299 (DFDLLTVSETANEPP). A disordered region spans residues 523–548 (PDGTFSSDEDEEEEEEEEEEEEEEET). Residues serine 528 and serine 529 each carry the phosphoserine modification. Positions 529–548 (SDEDEEEEEEEEEEEEEEET) are enriched in acidic residues.

Belongs to the eIF-3 subunit D family. Component of the eukaryotic translation initiation factor 3 (eIF-3) complex, which is composed of 13 subunits: EIF3A, EIF3B, EIF3C, EIF3D, EIF3E, EIF3F, EIF3G, EIF3H, EIF3I, EIF3J, EIF3K, EIF3L and EIF3M. The eIF-3 complex appears to include 3 stable modules: module A is composed of EIF3A, EIF3B, EIF3G and EIF3I; module B is composed of EIF3F, EIF3H, and EIF3M; and module C is composed of EIF3C, EIF3D, EIF3E, EIF3K and EIF3L. EIF3C of module C binds EIF3B of module A and EIF3H of module B, thereby linking the three modules. EIF3J is a labile subunit that binds to the eIF-3 complex via EIF3B. The eIF-3 complex interacts with RPS6KB1 under conditions of nutrient depletion. Mitogenic stimulation leads to binding and activation of a complex composed of MTOR and RPTOR, leading to phosphorylation and release of RPS6KB1 and binding of EIF4B to eIF-3.

It localises to the cytoplasm. Its function is as follows. mRNA cap-binding component of the eukaryotic translation initiation factor 3 (eIF-3) complex, a complex required for several steps in the initiation of protein synthesis of a specialized repertoire of mRNAs. The eIF-3 complex associates with the 40S ribosome and facilitates the recruitment of eIF-1, eIF-1A, eIF-2:GTP:methionyl-tRNAi and eIF-5 to form the 43S pre-initiation complex (43S PIC). The eIF-3 complex stimulates mRNA recruitment to the 43S PIC and scanning of the mRNA for AUG recognition. The eIF-3 complex is also required for disassembly and recycling of post-termination ribosomal complexes and subsequently prevents premature joining of the 40S and 60S ribosomal subunits prior to initiation. The eIF-3 complex specifically targets and initiates translation of a subset of mRNAs involved in cell proliferation, including cell cycling, differentiation and apoptosis, and uses different modes of RNA stem-loop binding to exert either translational activation or repression. In the eIF-3 complex, EIF3D specifically recognizes and binds the 7-methylguanosine cap of a subset of mRNAs. This Macaca fascicularis (Crab-eating macaque) protein is Eukaryotic translation initiation factor 3 subunit D.